The chain runs to 177 residues: Early nodulin-like protein 6 (177 aa).

Positions Met-1–Cys-23 are cleaved as a signal peptide. A Phytocyanin domain is found at Thr-24 to Glu-127. Asn-41 carries N-linked (GlcNAc...) asparagine glycosylation. Cys-81 and Cys-115 form a disulfide bridge. Asn-149 carries the GPI-anchor amidated asparagine lipid modification. Residues His-150 to Val-177 constitute a propeptide, removed in mature form.

Belongs to the early nodulin-like (ENODL) family. In terms of tissue distribution, confined to flowers.

The protein resides in the cell membrane. In terms of biological role, may act as a carbohydrate transporter. The polypeptide is Early nodulin-like protein 6 (Arabidopsis thaliana (Mouse-ear cress)).